The sequence spans 393 residues: MTMLATEKNPMIVSMGPHHPSMHGVLRLIVTLDGENVTNCEPILGYLHRGMEKIAENRTIIQYLPYVTRWDYLATMFTEAITVNAPEKLANIQVPKRASYIRVIMPELSRIASHLLWLGPFMADIGAQTPFFYIFRERETIYDLFEAATGMRMMHNYFRIGGVAVDSPYGWVDKCSDFCNYSLPKVNEYERLITRNPIFLKRVEGVGTIGGEEAINWGLSGPMLRASGVQWDLRKVDHYECYDESDWQIQRQEEGDSLARYSVRIGETKESVKIVQQALKVIPGGPYENLEARRLNRGKNSEWNDFEYQFISRKPSPTFKLPKQEHYVRVEAPKGELGIFLMGDDSAFPWRWKIRPPGFINLQILPQLVEGVKLADIMTILGSIDITMGEVDR.

It belongs to the complex I 49 kDa subunit family. In terms of assembly, NDH is composed of at least 16 different subunits, 5 of which are encoded in the nucleus.

It localises to the plastid. It is found in the chloroplast thylakoid membrane. It catalyses the reaction a plastoquinone + NADH + (n+1) H(+)(in) = a plastoquinol + NAD(+) + n H(+)(out). The catalysed reaction is a plastoquinone + NADPH + (n+1) H(+)(in) = a plastoquinol + NADP(+) + n H(+)(out). Functionally, NDH shuttles electrons from NAD(P)H:plastoquinone, via FMN and iron-sulfur (Fe-S) centers, to quinones in the photosynthetic chain and possibly in a chloroplast respiratory chain. The immediate electron acceptor for the enzyme in this species is believed to be plastoquinone. Couples the redox reaction to proton translocation, and thus conserves the redox energy in a proton gradient. The polypeptide is NAD(P)H-quinone oxidoreductase subunit H, chloroplastic (Huperzia lucidula (Shining clubmoss)).